A 353-amino-acid polypeptide reads, in one-letter code: Ferredoxin--NADP reductase (353 aa).

8 residues coordinate FAD: Thr25, Glu44, Gln52, Tyr57, Val97, Phe132, Asp298, and Ser339.

This sequence belongs to the ferredoxin--NADP reductase type 2 family. Homodimer. It depends on FAD as a cofactor.

It carries out the reaction 2 reduced [2Fe-2S]-[ferredoxin] + NADP(+) + H(+) = 2 oxidized [2Fe-2S]-[ferredoxin] + NADPH. The sequence is that of Ferredoxin--NADP reductase from Chlorobium phaeovibrioides (strain DSM 265 / 1930) (Prosthecochloris vibrioformis (strain DSM 265)).